Reading from the N-terminus, the 1274-residue chain is Polycomb protein Sfmbt (1274 aa).

The interval 266 to 285 is disordered; the sequence is PSSKQMKGYRNSNSSGTSSA. Residues 267 to 278 show a composition bias toward polar residues; that stretch reads SSKQMKGYRNSN. The FCS-type zinc finger occupies 331–366; it reads PIQKDGMAVCERCGAIGVKHTFYTKSRRFCSMACAR. Positions 340, 343, 360, and 364 each coordinate Zn(2+). Positions 381–394 are enriched in low complexity; the sequence is TGATTSNNQSTSSS. Disordered stretches follow at residues 381–401 and 488–510; these read TGATTSNNQSTSSSPLPAASG and PGGEANGSGNDTSTPNTASSGYL. Polar residues predominate over residues 494 to 509; sequence GSGNDTSTPNTASSGY. 4 MBT repeats span residues 564 to 675, 683 to 781, 789 to 899, and 907 to 1003; these read YDWL…LIPP, KDWK…LAAP, LAGR…VTPP, and FTWE…LEGP. Disordered regions lie at residues 1007–1063 and 1083–1167; these read SYQQ…TTPH and YENN…NSSA. The span at 1019-1028 shows a compositional bias: basic residues; that stretch reads KVPRKKKTKK. Residues 1038 to 1050 show a composition bias toward low complexity; sequence AKQQNDNTQTTQT. Residues 1087 to 1114 show a composition bias toward acidic residues; sequence QPEDGDGDEEDPDPDADADLDADADGDG. 2 stretches are compositionally biased toward polar residues: residues 1117-1128 and 1158-1167; these read STSHISEQSTTH and GNSNKMNSSA. An SAM domain is found at 1194-1258; it reads WNVYDVSQFL…DLITQLKCKV (65 aa).

Interacts with pho as a component of the pho-repressive complex (PhoRC).

Its subcellular location is the nucleus. In terms of biological role, polycomb group (PcG) protein that binds to the Polycomb response elements (PREs) found in the regulatory regions of many genes. PcG proteins act by forming multiprotein complexes, which are required to maintain the transcriptionally repressive state of homeotic genes throughout development. PcG proteins are not required to initiate repression, but to maintain it during later stages of development. They probably act via the methylation of histones, rendering chromatin heritably changed in its expressibility. Necessary but not sufficient to recruit a functional PcG repressive complex that represses target genes, suggesting that the recruitment of the distinct PRC1 complex is also required to allow a subsequent repression. This is Polycomb protein Sfmbt from Drosophila pseudoobscura pseudoobscura (Fruit fly).